The following is a 207-amino-acid chain: Fibronectin type III domain-containing protein 5b (207 aa).

Positions 1–26 are cleaved as a signal peptide; sequence MWGIKGSFAVLLLLFLAYIFASSVNA. Residues 27–146 are Extracellular-facing; that stretch reads DSLSAPLNVT…EEVGQAAQLR (120 aa). Positions 31–122 constitute a Fibronectin type-III domain; it reads APLNVTIKAL…EPVLFRTPKE (92 aa). N-linked (GlcNAc...) asparagine glycans are attached at residues asparagine 34 and asparagine 79. Residues 147-167 form a helical membrane-spanning segment; that stretch reads AGELIIIVVVLVMWAGVIALF. Residues 168 to 207 lie on the Cytoplasmic side of the membrane; sequence CRQYDIIKDNEPNNNKDKAKNSSECSTPEHPTGGLLRSKV. Over residues 178–188 the composition is skewed to basic and acidic residues; that stretch reads EPNNNKDKAKN. The segment at 178-207 is disordered; it reads EPNNNKDKAKNSSECSTPEHPTGGLLRSKV. Residues 205 to 207 carry the Microbody targeting signal motif; it reads SKV.

In terms of assembly, dimer; may exist in other oligomeric forms. Post-translationally, the extracellular domain is cleaved and released from the cell membrane.

It is found in the cell membrane. Its subcellular location is the peroxisome membrane. It localises to the secreted. Its function is as follows. May mediate beneficial effects of muscular exercise. This Danio rerio (Zebrafish) protein is Fibronectin type III domain-containing protein 5b (fndc5b).